Here is a 448-residue protein sequence, read N- to C-terminus: MSFTPGKQSSSRASFGNRSGNGILKWADQSDQSRNVQTRGRRAQPKQTATSQLPSGGNVVPYYSWFSGITQFQKGKEFEFAEGQGVPIAPGVPATEAKGYWYRHNRRSFKTADGNQRQLLPRWYFYYLGTGPHAKDQYGTDIDGVFWVASNQADVNTPADILDRDPSSDEAIPTRFPPGTVLPQGYYIEGSGRSAPNSRSTSRASSRASSAGSRSRANSGNRTPTSGVTPDMADQIASLVLAKLGKDATKPQQVTKQTAKEIRQKILNKPRQKRSPNKQCTVQQCFGKRGPNQNFGGGEMLKLGTSDPQFPILAELAPTAGAFFFGSRLELAKVQNLSGNLDEPQKDVYELRYNGAIRFDSTLSGFETIMKVLNENLNAYQQQDGMMNMSPKPQRQRGQKNGQGENDNISVAAPKSRVQQNKSRELTAEDISLLKKMDEPYTEDTSEI.

Composition is skewed to polar residues over residues 1–20, 29–38, and 45–55; these read MSFT…NRSG, QSDQSRNVQT, and PKQTATSQLPS. The tract at residues 1–55 is disordered; the sequence is MSFTPGKQSSSRASFGNRSGNGILKWADQSDQSRNVQTRGRRAQPKQTATSQLPS. An RNA-binding region spans residues 52–194; it reads QLPSGGNVVP…GYYIEGSGRS (143 aa). The CoV N NTD domain maps to 61-190; that stretch reads PYYSWFSGIT…VLPQGYYIEG (130 aa). RNA is bound by residues Arg-106, Arg-122, and Arg-164. 3 disordered regions span residues 157 to 231, 266 to 297, and 385 to 448; these read TPAD…VTPD, ILNK…NFGG, and GMMN…TSEI. Residue Ser-167 is modified to Phosphoserine; by host. Thr-174 bears the Phosphothreonine; by host mark. Ser-191 carries the post-translational modification Phosphoserine; by host. Over residues 193-223 the composition is skewed to low complexity; the sequence is RSAPNSRSTSRASSRASSAGSRSRANSGNRT. The region spanning 259–384 is the CoV N CTD domain; the sequence is AKEIRQKILN…ENLNAYQQQD (126 aa). Basic residues predominate over residues 266 to 276; that stretch reads ILNKPRQKRSP. A dimerization region spans residues 266 to 384; the sequence is ILNKPRQKRS…ENLNAYQQQD (119 aa). Residue Ser-390 is modified to Phosphoserine; by host. The span at 399 to 409 shows a compositional bias: polar residues; the sequence is QKNGQGENDNI. A compositionally biased stretch (basic and acidic residues) spans 422 to 439; it reads KSRELTAEDISLLKKMDE. Position 423 is a phosphoserine; by host (Ser-423). Thr-427 is subject to Phosphothreonine; by host.

This sequence belongs to the betacoronavirus nucleocapsid protein family. In terms of assembly, homooligomer. Both monomeric and oligomeric forms interact with RNA. Interacts with protein M. Interacts with NSP3; this interaction serves to tether the genome to the newly translated replicase-transcriptase complex at a very early stage of infection. Post-translationally, ADP-ribosylated. The ADP-ribosylation is retained in the virion during infection. Phosphorylated on serine and threonine residues.

The protein resides in the virion. The protein localises to the host endoplasmic reticulum-Golgi intermediate compartment. It is found in the host Golgi apparatus. Functionally, packages the positive strand viral genome RNA into a helical ribonucleocapsid (RNP) and plays a fundamental role during virion assembly through its interactions with the viral genome and membrane protein M. Plays an important role in enhancing the efficiency of subgenomic viral RNA transcription as well as viral replication. The protein is Nucleoprotein of Bos taurus (Bovine).